Consider the following 904-residue polypeptide: Alanine--tRNA ligase (904 aa).

H584, H588, C687, and H691 together coordinate Zn(2+).

Belongs to the class-II aminoacyl-tRNA synthetase family. Zn(2+) serves as cofactor.

It is found in the cytoplasm. It catalyses the reaction tRNA(Ala) + L-alanine + ATP = L-alanyl-tRNA(Ala) + AMP + diphosphate. In terms of biological role, catalyzes the attachment of alanine to tRNA(Ala) in a two-step reaction: alanine is first activated by ATP to form Ala-AMP and then transferred to the acceptor end of tRNA(Ala). Also edits incorrectly charged Ser-tRNA(Ala) and Gly-tRNA(Ala) via its editing domain. This Mycobacterium tuberculosis (strain ATCC 25177 / H37Ra) protein is Alanine--tRNA ligase.